We begin with the raw amino-acid sequence, 102 residues long: UPF0213 protein XCC3072 (102 aa).

The 76-residue stretch at 5-80 folds into the GIY-YIG domain; that stretch reads KPWHLYLLLC…KQQPRARKLA (76 aa).

Belongs to the UPF0213 family.

The sequence is that of UPF0213 protein XCC3072 from Xanthomonas campestris pv. campestris (strain ATCC 33913 / DSM 3586 / NCPPB 528 / LMG 568 / P 25).